A 660-amino-acid chain; its full sequence is Oligopeptide-binding protein AliA (660 aa).

The N-terminal stretch at 1 to 22 (MKSSKLFALAGVTLLAATTLAA) is a signal peptide. C23 carries N-palmitoyl cysteine lipidation. C23 is lipidated: S-diacylglycerol cysteine. Residues 638-660 (EKWMKEKEESNKKAQEDLAKHVK) form a disordered region.

It belongs to the bacterial solute-binding protein 5 family.

The protein localises to the cell membrane. Part of the binding-protein-dependent transport system for oligopeptides; probably an oligopeptide binding protein. The sequence is that of Oligopeptide-binding protein AliA (aliA) from Streptococcus pneumoniae serotype 4 (strain ATCC BAA-334 / TIGR4).